A 238-amino-acid chain; its full sequence is Small ribosomal subunit protein uS3 (238 aa).

The KH type-2 domain occupies 39-107 (MREFIHDYAK…ELHLNIVEIR (69 aa)). Positions 212–222 (PQAHDRRHSEA) are enriched in basic and acidic residues. Residues 212–238 (PQAHDRRHSEAQEGAAPRPPRRDRERA) are disordered.

It belongs to the universal ribosomal protein uS3 family. Part of the 30S ribosomal subunit. Forms a tight complex with proteins S10 and S14.

Binds the lower part of the 30S subunit head. Binds mRNA in the 70S ribosome, positioning it for translation. This chain is Small ribosomal subunit protein uS3, found in Cereibacter sphaeroides (strain ATCC 17029 / ATH 2.4.9) (Rhodobacter sphaeroides).